Here is a 93-residue protein sequence, read N- to C-terminus: Ribonuclease P protein component 1 (93 aa).

It belongs to the eukaryotic/archaeal RNase P protein component 1 family. Consists of a catalytic RNA component and at least 4-5 protein subunits.

The protein resides in the cytoplasm. It carries out the reaction Endonucleolytic cleavage of RNA, removing 5'-extranucleotides from tRNA precursor.. Part of ribonuclease P, a protein complex that generates mature tRNA molecules by cleaving their 5'-ends. The sequence is that of Ribonuclease P protein component 1 from Methanothermobacter thermautotrophicus (strain ATCC 29096 / DSM 1053 / JCM 10044 / NBRC 100330 / Delta H) (Methanobacterium thermoautotrophicum).